The following is a 354-amino-acid chain: Cytoplasmic tRNA 2-thiolation protein 1 (354 aa).

Belongs to the TtcA family. CTU1/NCS6/ATPBD3 subfamily.

It is found in the cytoplasm. Its pathway is tRNA modification; 5-methoxycarbonylmethyl-2-thiouridine-tRNA biosynthesis. In terms of biological role, plays a central role in 2-thiolation of mcm(5)S(2)U at tRNA wobble positions of tRNA(Lys), tRNA(Glu) and tRNA(Gln). Directly binds tRNAs and probably acts by catalyzing adenylation of tRNAs, an intermediate required for 2-thiolation. It is unclear whether it acts as a sulfurtransferase that transfers sulfur from thiocarboxylated URM1 onto the uridine of tRNAs at wobble position. Prior mcm(5) tRNA modification by the elongator complex is required for 2-thiolation. May also be involved in protein urmylation. The protein is Cytoplasmic tRNA 2-thiolation protein 1 of Laccaria bicolor (strain S238N-H82 / ATCC MYA-4686) (Bicoloured deceiver).